Consider the following 251-residue polypeptide: Imidazole glycerol phosphate synthase subunit HisF (251 aa).

Residues aspartate 11 and aspartate 130 contribute to the active site.

Belongs to the HisA/HisF family. As to quaternary structure, heterodimer of HisH and HisF.

It localises to the cytoplasm. It catalyses the reaction 5-[(5-phospho-1-deoxy-D-ribulos-1-ylimino)methylamino]-1-(5-phospho-beta-D-ribosyl)imidazole-4-carboxamide + L-glutamine = D-erythro-1-(imidazol-4-yl)glycerol 3-phosphate + 5-amino-1-(5-phospho-beta-D-ribosyl)imidazole-4-carboxamide + L-glutamate + H(+). Its pathway is amino-acid biosynthesis; L-histidine biosynthesis; L-histidine from 5-phospho-alpha-D-ribose 1-diphosphate: step 5/9. Its function is as follows. IGPS catalyzes the conversion of PRFAR and glutamine to IGP, AICAR and glutamate. The HisF subunit catalyzes the cyclization activity that produces IGP and AICAR from PRFAR using the ammonia provided by the HisH subunit. This chain is Imidazole glycerol phosphate synthase subunit HisF, found in Chlorobium chlorochromatii (strain CaD3).